Reading from the N-terminus, the 128-residue chain is uncharacterized protein (128 aa).

Over residues 1–11 (MDNKKKEENPS) the composition is skewed to basic and acidic residues. Residues 1 to 40 (MDNKKKEENPSKSDTSISLPPSSTGEALQNYTESEWNASD) form a disordered region. The span at 12–37 (KSDTSISLPPSSTGEALQNYTESEWN) shows a compositional bias: polar residues.

This is an uncharacterized protein from Caenorhabditis elegans.